A 1026-amino-acid polypeptide reads, in one-letter code: Beta-galactosidase (1026 aa).

E458 serves as the catalytic Proton donor. The active-site Nucleophile is E546.

The protein belongs to the glycosyl hydrolase 2 family.

The enzyme catalyses Hydrolysis of terminal non-reducing beta-D-galactose residues in beta-D-galactosides.. The protein is Beta-galactosidase (lacZ) of Streptococcus thermophilus.